Reading from the N-terminus, the 216-residue chain is Large ribosomal subunit protein uL3 (216 aa).

At Gln-157 the chain carries N5-methylglutamine.

Belongs to the universal ribosomal protein uL3 family. As to quaternary structure, part of the 50S ribosomal subunit. Forms a cluster with proteins L14 and L19. In terms of processing, methylated by PrmB.

Functionally, one of the primary rRNA binding proteins, it binds directly near the 3'-end of the 23S rRNA, where it nucleates assembly of the 50S subunit. The polypeptide is Large ribosomal subunit protein uL3 (Stenotrophomonas maltophilia (strain R551-3)).